The chain runs to 269 residues: Shikimate dehydrogenase (NADP(+)) (269 aa).

Shikimate-binding positions include 14–16 and Thr-60; that span reads TLS. Lys-64 (proton acceptor) is an active-site residue. An NADP(+)-binding site is contributed by Asp-76. Shikimate contacts are provided by Asn-85 and Asp-100. Residues 122 to 126 and Met-208 each bind NADP(+); that span reads GAGGA. Shikimate is bound at residue Tyr-210. Gly-232 contributes to the NADP(+) binding site.

It belongs to the shikimate dehydrogenase family. Homodimer.

The catalysed reaction is shikimate + NADP(+) = 3-dehydroshikimate + NADPH + H(+). It functions in the pathway metabolic intermediate biosynthesis; chorismate biosynthesis; chorismate from D-erythrose 4-phosphate and phosphoenolpyruvate: step 4/7. Involved in the biosynthesis of the chorismate, which leads to the biosynthesis of aromatic amino acids. Catalyzes the reversible NADPH linked reduction of 3-dehydroshikimate (DHSA) to yield shikimate (SA). The protein is Shikimate dehydrogenase (NADP(+)) of Caldivirga maquilingensis (strain ATCC 700844 / DSM 13496 / JCM 10307 / IC-167).